The following is a 207-amino-acid chain: 3-hexulose-6-phosphate synthase (207 aa).

The protein belongs to the HPS/KGPDC family. HPS subfamily.

The enzyme catalyses D-ribulose 5-phosphate + formaldehyde = D-arabino-hex-3-ulose 6-phosphate. The protein operates within one-carbon metabolism; formaldehyde assimilation via RuMP pathway; D-fructose 6-phosphate from D-ribulose 5-phosphate and formaldehyde: step 1/2. Functionally, catalyzes the condensation of ribulose 5-phosphate with formaldehyde to form 3-hexulose 6-phosphate. This Mycobacterium gastri protein is 3-hexulose-6-phosphate synthase (rmpA).